The sequence spans 367 residues: Germination protease (367 aa).

A propeptide spanning residues 1 to 15 is cleaved from the precursor; it reads MKEPLDLSKYSVRTD.

It belongs to the peptidase A25 family. Homotetramer. Post-translationally, autoproteolytically processed. The inactive tetrameric zymogen termed p46 autoprocesses to a smaller form termed p41, which is active only during spore germination.

The catalysed reaction is Endopeptidase action with P4 Glu or Asp, P1 preferably Glu &gt; Asp, P1' hydrophobic and P2' Ala.. Initiates the rapid degradation of small, acid-soluble proteins during spore germination. The polypeptide is Germination protease (Bacillus cereus (strain AH187)).